A 93-amino-acid chain; its full sequence is Small ribosomal subunit protein uS19 (93 aa).

It belongs to the universal ribosomal protein uS19 family.

Its function is as follows. Protein S19 forms a complex with S13 that binds strongly to the 16S ribosomal RNA. The sequence is that of Small ribosomal subunit protein uS19 from Mycobacterium marinum (strain ATCC BAA-535 / M).